Reading from the N-terminus, the 146-residue chain is Hemoglobin subunit beta-1 (146 aa).

The Globin domain maps to 2 to 146; that stretch reads HWTAEEKQLI…VSHSLARRYH (145 aa). H63 and H92 together coordinate heme b.

The protein belongs to the globin family. In terms of assembly, the major hemoglobin component (HbIII) is a tetramer of two alpha-2 chains and two beta-1 chains. As to expression, red blood cells.

Its function is as follows. Involved in oxygen transport from the lung to the various peripheral tissues. In Varanus albigularis (White-throated monitor), this protein is Hemoglobin subunit beta-1 (HBB1).